Reading from the N-terminus, the 239-residue chain is tRNA (guanine-N(7)-)-methyltransferase (239 aa).

S-adenosyl-L-methionine contacts are provided by Glu-69, Glu-94, Asp-121, and Asp-144. Asp-144 is an active-site residue. Lys-148 provides a ligand contact to substrate. The interval Arg-150–Arg-155 is interaction with RNA. Residues Asp-180 and Thr-217–Glu-220 each bind substrate.

Belongs to the class I-like SAM-binding methyltransferase superfamily. TrmB family. In terms of assembly, monomer.

The enzyme catalyses guanosine(46) in tRNA + S-adenosyl-L-methionine = N(7)-methylguanosine(46) in tRNA + S-adenosyl-L-homocysteine. The protein operates within tRNA modification; N(7)-methylguanine-tRNA biosynthesis. Its function is as follows. Catalyzes the formation of N(7)-methylguanine at position 46 (m7G46) in tRNA. The polypeptide is tRNA (guanine-N(7)-)-methyltransferase (Salmonella typhi).